A 1298-amino-acid chain; its full sequence is Phosphoribosylformylglycinamidine synthase (1298 aa).

Residues 303 to 327 (FPGAATGSGGEIRDEGATGRGAKPK) form a disordered region. ATP-binding positions include 305 to 316 (GAATGSGGEIRD), 384 to 386 (TGY), and Ala-676. 4 residues coordinate Mg(2+): Asp-677, Glu-716, Asn-720, and Asp-884. Ser-886 contacts ATP. Positions 1045-1298 (VAVLREQGVN…MFRNARAWVN (254 aa)) constitute a Glutamine amidotransferase type-1 domain. Cys-1138 functions as the Nucleophile in the catalytic mechanism. Catalysis depends on residues His-1263 and Glu-1265.

The protein in the N-terminal section; belongs to the FGAMS family. Monomer.

It localises to the cytoplasm. The catalysed reaction is N(2)-formyl-N(1)-(5-phospho-beta-D-ribosyl)glycinamide + L-glutamine + ATP + H2O = 2-formamido-N(1)-(5-O-phospho-beta-D-ribosyl)acetamidine + L-glutamate + ADP + phosphate + H(+). The protein operates within purine metabolism; IMP biosynthesis via de novo pathway; 5-amino-1-(5-phospho-D-ribosyl)imidazole from N(2)-formyl-N(1)-(5-phospho-D-ribosyl)glycinamide: step 1/2. Phosphoribosylformylglycinamidine synthase involved in the purines biosynthetic pathway. Catalyzes the ATP-dependent conversion of formylglycinamide ribonucleotide (FGAR) and glutamine to yield formylglycinamidine ribonucleotide (FGAM) and glutamate. This is Phosphoribosylformylglycinamidine synthase from Pseudomonas savastanoi pv. phaseolicola (strain 1448A / Race 6) (Pseudomonas syringae pv. phaseolicola (strain 1448A / Race 6)).